Here is a 37-residue protein sequence, read N- to C-terminus: Omega/M-ectatotoxin-Et1a subunit A (37 aa).

Cysteine 12 and cysteine 34 are joined by a disulfide.

The protein belongs to the ectatomin family. Ectatomin-Et subfamily. Heterodimer of an A and a B chain; disulfide-linked. Expressed by the venom gland.

Its subcellular location is the secreted. It localises to the target cell membrane. Its function is as follows. Algogenic for animals, human and insects. At high concentrations (0.5-1 uM), it acts as a pore-forming protein that forms nonselective cation channels both in cell and artificial membranes. It is weakly selective for cation over anions channel conductance is identical in both directions. At lower concentrations (1-10 nM), this heterodimer inhibits cardiac L-type calcium currents in isolated rat cardiac ventricular myocytes. This Ectatomma tuberculatum (Selva ant) protein is Omega/M-ectatotoxin-Et1a subunit A.